Reading from the N-terminus, the 447-residue chain is tRNA threonylcarbamoyladenosine dehydratase 2 (447 aa).

Helical transmembrane passes span 9 to 29 (LITA…YAWT), 86 to 106 (NQYV…NSLV), and 294 to 314 (ILPV…TWIL).

Belongs to the HesA/MoeB/ThiF family.

It is found in the mitochondrion outer membrane. In terms of biological role, catalyzes the ATP-dependent dehydration of threonylcarbamoyladenosine at position 37 (t(6)A37) to form cyclic t(6)A37 (ct(6)A37) in tRNAs that read codons beginning with adenine. The sequence is that of tRNA threonylcarbamoyladenosine dehydratase 2 (TCD2) from Saccharomyces cerevisiae (strain ATCC 204508 / S288c) (Baker's yeast).